The following is a 517-amino-acid chain: Variant surface glycoprotein MVAT5 (517 aa).

Positions 1-21 (MIGKAFIILSLLNELPTPTAA) are cleaved as a signal peptide. Cystine bridges form between Cys417–Cys430 and Cys426–Cys443. Asn435 carries an N-linked (GlcNAc...) asparagine glycan. Positions 454 to 470 (QAAQTAGAGEGAAGTTT) are enriched in low complexity. Positions 454–487 (QAAQTAGAGEGAAGTTTDKCKDKKKDDCKSPDCK) are disordered. The segment covering 471–487 (DKCKDKKKDDCKSPDCK) has biased composition (basic and acidic residues). A lipid anchor (GPI-anchor amidated aspartate) is attached at Asp495. Positions 496–517 (SSILLNKQFALMVSAAFVALLF) are cleaved as a propeptide — removed in mature form.

Its subcellular location is the cell membrane. VSG forms a coat on the surface of the parasite. The trypanosome evades the immune response of the host by expressing a series of antigenically distinct VSGs from an estimated 1000 VSG genes. The chain is Variant surface glycoprotein MVAT5 from Trypanosoma brucei rhodesiense.